A 138-amino-acid chain; its full sequence is Acidic phospholipase A2 jerdoxin (138 aa).

An N-terminal signal peptide occupies residues 1-16 (MRTLWIMAVLLVGVEG). 7 disulfide bridges follow: C42–C131, C44–C60, C59–C111, C65–C138, C66–C104, C73–C97, and C91–C102. Positions 43, 45, and 47 each coordinate Ca(2+). H63 is an active-site residue. D64 lines the Ca(2+) pocket. The active site involves D105.

The protein belongs to the phospholipase A2 family. Group II subfamily. D49 sub-subfamily. Monomer. The cofactor is Ca(2+). As to expression, expressed by the venom gland.

It localises to the secreted. It carries out the reaction a 1,2-diacyl-sn-glycero-3-phosphocholine + H2O = a 1-acyl-sn-glycero-3-phosphocholine + a fatty acid + H(+). Functionally, snake venom phospholipase A2 (PLA2) that displays edema-inducing activities, exhibits indirect hemolytic activity, and inhibits ADP-induced platelet aggregation. PLA2 catalyzes the calcium-dependent hydrolysis of the 2-acyl groups in 3-sn-phosphoglycerides. This is Acidic phospholipase A2 jerdoxin from Protobothrops jerdonii (Jerdon's pitviper).